The chain runs to 300 residues: MPSLTMTDSSYIGRFAPTPSGFLHFGSLVAALASWLDARAVNGRWLLRMEDTDPPREMPGARDAILQTLERYGLHWDGEVVFQSQRHDAYAAVVDRLFNMGLAYACTCSRKQLERYNGIYPGFCRNAGHAREGAAIRLRVPELIYRFTDRVQGEYQQHLGREVGDFVIQRRDGLYAYQLAVVLDDAWQGVTDIVRGADLLDNTPRQLYLQELLGFSQPRYLHIPLIVQPDGHKLGKSYRSPPLQAEHATPLLLRALRALGQETDPELLLATPAEVLAVARTQWRPEAIAQRTTVPEADLR.

Residues 14-18 (RFAPT) and E50 each bind L-glutamate. Residues 17 to 27 (PTPSGFLHFGS) carry the 'HIGH' region motif. Zn(2+)-binding residues include C106, C108, Y120, and C124. Residues Y177 and R195 each coordinate L-glutamate. Positions 233–237 (KLGKS) match the 'KMSKS' region motif. K236 is an ATP binding site.

The protein belongs to the class-I aminoacyl-tRNA synthetase family. GluQ subfamily. The cofactor is Zn(2+).

Its function is as follows. Catalyzes the tRNA-independent activation of glutamate in presence of ATP and the subsequent transfer of glutamate onto a tRNA(Asp). Glutamate is transferred on the 2-amino-5-(4,5-dihydroxy-2-cyclopenten-1-yl) moiety of the queuosine in the wobble position of the QUC anticodon. The polypeptide is Glutamyl-Q tRNA(Asp) synthetase (Pseudomonas putida (strain ATCC 700007 / DSM 6899 / JCM 31910 / BCRC 17059 / LMG 24140 / F1)).